A 654-amino-acid chain; its full sequence is Pheromone-processing carboxypeptidase KEX1 (654 aa).

The N-terminal stretch at 1–18 is a signal peptide; that stretch reads MIVRLFWLAVLWLALANA. At 19–533 the chain is on the lumenal side; it reads NPLKRLNHVW…TESHATRIVR (515 aa). N-linked (GlcNAc...) asparagine glycans are attached at residues Asn69 and Asn89. Catalysis depends on residues Ser188 and Asp395. A glycan (N-linked (GlcNAc...) asparagine) is linked at Asn442. His453 is a catalytic residue. Positions 484 to 500 are enriched in polar residues; the sequence is QAKKTNANQNDSPSASE. The interval 484–526 is disordered; sequence QAKKTNANQNDSPSASENDNESGRTSESASSSPSESAATETES. Asn503 carries an N-linked (GlcNAc...) asparagine glycan. Low complexity predominate over residues 508–523; that stretch reads TSESASSSPSESAATE. A helical transmembrane segment spans residues 534-554; sequence LIQLAVIIILIWGLCAIYSTY. Topologically, residues 555–654 are cytoplasmic; that stretch reads RSKPTSIIKT…ENAHEHTEEH (100 aa). A disordered region spans residues 606-654; sequence PVDIELGPTDGMDDASSDSGPSNVGTAETPEFVIASDDEENAHEHTEEH. Polar residues predominate over residues 622-631; sequence SDSGPSNVGT.

This sequence belongs to the peptidase S10 family.

Its subcellular location is the golgi apparatus. It is found in the trans-Golgi network membrane. It carries out the reaction Preferential release of a C-terminal arginine or lysine residue.. Functionally, protease with a carboxypeptidase B-like function involved in the C-terminal processing of the lysine and arginine residues from protein precursors. Promotes cell fusion and is involved in the programmed cell death. The protein is Pheromone-processing carboxypeptidase KEX1 (KEX1) of Clavispora lusitaniae (strain ATCC 42720) (Yeast).